The sequence spans 194 residues: dITP/XTP pyrophosphatase (194 aa).

7–12 (SGNVNK) is a substrate binding site. Mg(2+)-binding residues include E38 and D67. D67 functions as the Proton acceptor in the catalytic mechanism. Substrate-binding positions include S68, 151–154 (FGYD), K174, and 179–180 (HR).

It belongs to the HAM1 NTPase family. As to quaternary structure, homodimer. Mg(2+) is required as a cofactor.

It catalyses the reaction XTP + H2O = XMP + diphosphate + H(+). The catalysed reaction is dITP + H2O = dIMP + diphosphate + H(+). The enzyme catalyses ITP + H2O = IMP + diphosphate + H(+). Pyrophosphatase that catalyzes the hydrolysis of nucleoside triphosphates to their monophosphate derivatives, with a high preference for the non-canonical purine nucleotides XTP (xanthosine triphosphate), dITP (deoxyinosine triphosphate) and ITP. Seems to function as a house-cleaning enzyme that removes non-canonical purine nucleotides from the nucleotide pool, thus preventing their incorporation into DNA/RNA and avoiding chromosomal lesions. The polypeptide is dITP/XTP pyrophosphatase (Treponema denticola (strain ATCC 35405 / DSM 14222 / CIP 103919 / JCM 8153 / KCTC 15104)).